A 438-amino-acid polypeptide reads, in one-letter code: Trigger factor (438 aa).

Residues 162 to 247 form the PPIase FKBP-type domain; it reads GDIVTIDFEG…VKDIKVKELP (86 aa).

This sequence belongs to the FKBP-type PPIase family. Tig subfamily.

It localises to the cytoplasm. The enzyme catalyses [protein]-peptidylproline (omega=180) = [protein]-peptidylproline (omega=0). Its function is as follows. Involved in protein export. Acts as a chaperone by maintaining the newly synthesized protein in an open conformation. Functions as a peptidyl-prolyl cis-trans isomerase. The chain is Trigger factor from Caldicellulosiruptor bescii (strain ATCC BAA-1888 / DSM 6725 / KCTC 15123 / Z-1320) (Anaerocellum thermophilum).